Consider the following 226-residue polypeptide: Beta-casein (226 aa).

Residues 1–51 (REKEELNVSSETVESLSSNEPDSSSEESITHINKEKSQKFKHEGQQQREVE) are disordered. Position 9 is a phosphoserine (Ser-9). Thr-12 bears the Phosphothreonine mark. Phosphoserine is present on residues Ser-15, Ser-17, Ser-18, and Ser-25. Residues 28–51 (SITHINKEKSQKFKHEGQQQREVE) show a composition bias toward basic and acidic residues.

The protein belongs to the beta-casein family. There are at least three different forms found in milk, with varying degrees of phosphorylation. These include form 5-P which is phosphorylated at three sites, this form is present in low amounts, form 6-P which is phosphorylated at six sites, and form 7-P which is phosphorylated at seven sites. In terms of tissue distribution, mammary gland specific. Secreted in milk.

Its subcellular location is the secreted. In terms of biological role, important role in determination of the surface properties of the casein micelles. The polypeptide is Beta-casein (Equus asinus (Donkey)).